The primary structure comprises 251 residues: 3-deoxy-manno-octulosonate cytidylyltransferase (251 aa).

The protein belongs to the KdsB family.

The protein localises to the cytoplasm. The catalysed reaction is 3-deoxy-alpha-D-manno-oct-2-ulosonate + CTP = CMP-3-deoxy-beta-D-manno-octulosonate + diphosphate. Its pathway is nucleotide-sugar biosynthesis; CMP-3-deoxy-D-manno-octulosonate biosynthesis; CMP-3-deoxy-D-manno-octulosonate from 3-deoxy-D-manno-octulosonate and CTP: step 1/1. The protein operates within bacterial outer membrane biogenesis; lipopolysaccharide biosynthesis. Functionally, activates KDO (a required 8-carbon sugar) for incorporation into bacterial lipopolysaccharide in Gram-negative bacteria. This Agrobacterium fabrum (strain C58 / ATCC 33970) (Agrobacterium tumefaciens (strain C58)) protein is 3-deoxy-manno-octulosonate cytidylyltransferase.